The following is a 143-amino-acid chain: MAIERTFSIIKPDAVAKNHIGAIYNRFETAGLKIIASKMVHLSKEQAEGFYAEHSERPFFGALVEFMTSGPIMVQVLEGENAVLANREIMGATNPAEAARGTLRADFADSIDENAVHGSDAVASAEREIAYFFSAEELCPRTR.

6 residues coordinate ATP: Lys-11, Phe-59, Arg-87, Thr-93, Arg-104, and Asn-114. His-117 acts as the Pros-phosphohistidine intermediate in catalysis.

The protein belongs to the NDK family. Homotetramer. It depends on Mg(2+) as a cofactor.

It localises to the cytoplasm. It carries out the reaction a 2'-deoxyribonucleoside 5'-diphosphate + ATP = a 2'-deoxyribonucleoside 5'-triphosphate + ADP. The catalysed reaction is a ribonucleoside 5'-diphosphate + ATP = a ribonucleoside 5'-triphosphate + ADP. In terms of biological role, major role in the synthesis of nucleoside triphosphates other than ATP. The ATP gamma phosphate is transferred to the NDP beta phosphate via a ping-pong mechanism, using a phosphorylated active-site intermediate. The sequence is that of Nucleoside diphosphate kinase from Shewanella loihica (strain ATCC BAA-1088 / PV-4).